The chain runs to 498 residues: Probable malate:quinone oxidoreductase 2 (498 aa).

Belongs to the MQO family. The cofactor is FAD.

The enzyme catalyses (S)-malate + a quinone = a quinol + oxaloacetate. The protein operates within carbohydrate metabolism; tricarboxylic acid cycle; oxaloacetate from (S)-malate (quinone route): step 1/1. The chain is Probable malate:quinone oxidoreductase 2 from Staphylococcus aureus (strain MW2).